The following is a 153-amino-acid chain: D-aminoacyl-tRNA deacylase (153 aa).

The short motif at 142–143 (GP) is the Gly-cisPro motif, important for rejection of L-amino acids element.

The protein belongs to the DTD family. In terms of assembly, homodimer.

The protein localises to the cytoplasm. It catalyses the reaction glycyl-tRNA(Ala) + H2O = tRNA(Ala) + glycine + H(+). It carries out the reaction a D-aminoacyl-tRNA + H2O = a tRNA + a D-alpha-amino acid + H(+). Functionally, an aminoacyl-tRNA editing enzyme that deacylates mischarged D-aminoacyl-tRNAs. Also deacylates mischarged glycyl-tRNA(Ala), protecting cells against glycine mischarging by AlaRS. Acts via tRNA-based rather than protein-based catalysis; rejects L-amino acids rather than detecting D-amino acids in the active site. By recycling D-aminoacyl-tRNA to D-amino acids and free tRNA molecules, this enzyme counteracts the toxicity associated with the formation of D-aminoacyl-tRNA entities in vivo and helps enforce protein L-homochirality. In Acidovorax ebreus (strain TPSY) (Diaphorobacter sp. (strain TPSY)), this protein is D-aminoacyl-tRNA deacylase.